Consider the following 380-residue polypeptide: SAM and SH3 domain-containing protein 3 (380 aa).

The tract at residues 1–174 (MLRRKPSNAS…STAPQYTGPF (174 aa)) is disordered. The span at 22-41 (LQRSSSFKDFAKSKPSSPVV) shows a compositional bias: low complexity. Residues Ser-27, Ser-34, and Ser-42 each carry the phosphoserine modification. The residue at position 61 (Thr-61) is a Phosphothreonine. Residues 84-93 (MNRKTGKKMV) show a composition bias toward basic residues. Ser-97 carries the post-translational modification Phosphoserine. Thr-103 carries the phosphothreonine modification. Position 110 is a phosphoserine (Ser-110). Position 112 is a phosphothreonine (Thr-112). Ser-113 and Ser-120 each carry phosphoserine. Over residues 143-158 (RQASTGSELCSPSPGS) the composition is skewed to polar residues. In terms of domain architecture, SH3 spans 173-234 (PFCGRARVHT…KFIYVDVLPE (62 aa)). The region spanning 252–316 (PKPKTLHELL…LTAAELLLDY (65 aa)) is the SAM domain. Residue Thr-318 is modified to Phosphothreonine. Residues 318–327 (TGSEEAEEGT) are compositionally biased toward acidic residues. The tract at residues 318 to 380 (TGSEEAEEGT…LHGLSLSGAP (63 aa)) is disordered. At Ser-320 the chain carries Phosphoserine.

Belongs to the SASH family.

May function as a signaling adapter protein in lymphocytes. This Bos taurus (Bovine) protein is SAM and SH3 domain-containing protein 3.